The primary structure comprises 417 residues: Serine hydroxymethyltransferase 2 (417 aa).

(6S)-5,6,7,8-tetrahydrofolate is bound by residues leucine 121 and 125 to 127; that span reads GHL. Lysine 230 is modified (N6-(pyridoxal phosphate)lysine). 355–357 is a binding site for (6S)-5,6,7,8-tetrahydrofolate; it reads SPF.

This sequence belongs to the SHMT family. As to quaternary structure, homodimer. Pyridoxal 5'-phosphate is required as a cofactor.

It is found in the cytoplasm. It catalyses the reaction (6R)-5,10-methylene-5,6,7,8-tetrahydrofolate + glycine + H2O = (6S)-5,6,7,8-tetrahydrofolate + L-serine. It participates in one-carbon metabolism; tetrahydrofolate interconversion. The protein operates within amino-acid biosynthesis; glycine biosynthesis; glycine from L-serine: step 1/1. Functionally, catalyzes the reversible interconversion of serine and glycine with tetrahydrofolate (THF) serving as the one-carbon carrier. This reaction serves as the major source of one-carbon groups required for the biosynthesis of purines, thymidylate, methionine, and other important biomolecules. Also exhibits THF-independent aldolase activity toward beta-hydroxyamino acids, producing glycine and aldehydes, via a retro-aldol mechanism. This is Serine hydroxymethyltransferase 2 from Colwellia psychrerythraea (strain 34H / ATCC BAA-681) (Vibrio psychroerythus).